Here is a 161-residue protein sequence, read N- to C-terminus: NADH-quinone oxidoreductase subunit I (161 aa).

4Fe-4S ferredoxin-type domains follow at residues leucine 52–serine 82 and threonine 92–asparagine 121. [4Fe-4S] cluster is bound by residues cysteine 62, cysteine 65, cysteine 68, cysteine 72, cysteine 101, cysteine 104, cysteine 107, and cysteine 111.

This sequence belongs to the complex I 23 kDa subunit family. As to quaternary structure, NDH-1 is composed of 14 different subunits. Subunits NuoA, H, J, K, L, M, N constitute the membrane sector of the complex. Requires [4Fe-4S] cluster as cofactor.

The protein localises to the cell inner membrane. The catalysed reaction is a quinone + NADH + 5 H(+)(in) = a quinol + NAD(+) + 4 H(+)(out). In terms of biological role, NDH-1 shuttles electrons from NADH, via FMN and iron-sulfur (Fe-S) centers, to quinones in the respiratory chain. The immediate electron acceptor for the enzyme in this species is believed to be ubiquinone. Couples the redox reaction to proton translocation (for every two electrons transferred, four hydrogen ions are translocated across the cytoplasmic membrane), and thus conserves the redox energy in a proton gradient. This Pelagibacter ubique (strain HTCC1062) protein is NADH-quinone oxidoreductase subunit I.